The primary structure comprises 627 residues: uncharacterized protein (627 aa).

The 116-residue stretch at Gly21–Ser136 folds into the WH1 domain. Residues Arg310–Val347 are disordered.

This is an uncharacterized protein from Caenorhabditis elegans.